A 451-amino-acid chain; its full sequence is Alpha-galactosidase (451 aa).

5-71 (PKITFIGAGS…ASGKITCHTQ (67 aa)) contributes to the NAD(+) binding site. Position 151 (N151) interacts with substrate. C173 is a Mn(2+) binding site. H174 functions as the Proton donor in the catalytic mechanism. A Mn(2+)-binding site is contributed by H203. A substrate-binding site is contributed by R287.

This sequence belongs to the glycosyl hydrolase 4 family. In terms of assembly, homodimer. The cofactor is NAD(+). Mn(2+) serves as cofactor.

It carries out the reaction Hydrolysis of terminal, non-reducing alpha-D-galactose residues in alpha-D-galactosides, including galactose oligosaccharides, galactomannans and galactolipids.. This chain is Alpha-galactosidase (melA), found in Escherichia coli (strain K12).